We begin with the raw amino-acid sequence, 163 residues long: Shikimate kinase (163 aa).

10–15 serves as a coordination point for ATP; that stretch reads GVGKTT. Mg(2+) is bound at residue threonine 14. Substrate-binding residues include aspartate 28, arginine 52, and glycine 75. An ATP-binding site is contributed by arginine 116. Arginine 134 is a substrate binding site. Arginine 151 lines the ATP pocket.

The protein belongs to the shikimate kinase family. In terms of assembly, monomer. Mg(2+) serves as cofactor.

Its subcellular location is the cytoplasm. It carries out the reaction shikimate + ATP = 3-phosphoshikimate + ADP + H(+). Its pathway is metabolic intermediate biosynthesis; chorismate biosynthesis; chorismate from D-erythrose 4-phosphate and phosphoenolpyruvate: step 5/7. Its function is as follows. Catalyzes the specific phosphorylation of the 3-hydroxyl group of shikimic acid using ATP as a cosubstrate. The polypeptide is Shikimate kinase (Streptococcus pyogenes serotype M4 (strain MGAS10750)).